We begin with the raw amino-acid sequence, 71 residues long: Conotoxin LvVIIB (71 aa).

Residues 1-17 (VLIIAVLFLAASELVTA) form the signal peptide. Residues 18-42 (DYTRDEWQYRAASLRDAMRNFRDTR) constitute a propeptide that is removed on maturation. Disulfide bonds link cysteine 43-cysteine 57, cysteine 50-cysteine 62, and cysteine 56-cysteine 69.

It belongs to the conotoxin O1 superfamily. As to expression, expressed by the venom duct.

It localises to the secreted. The sequence is that of Conotoxin LvVIIB from Conus lividus (Livid cone).